A 590-amino-acid chain; its full sequence is Aspartate--tRNA(Asp/Asn) ligase (590 aa).

Glutamate 173 contributes to the L-aspartate binding site. The tract at residues 197 to 200 is aspartate; it reads QIFK. Residue arginine 219 coordinates L-aspartate. ATP is bound by residues 219–221 and glutamine 228; that span reads RDE. Histidine 450 contacts L-aspartate. Residue glutamate 484 participates in ATP binding. Arginine 491 provides a ligand contact to L-aspartate. Position 536-539 (536-539) interacts with ATP; sequence GLDR.

The protein belongs to the class-II aminoacyl-tRNA synthetase family. Type 1 subfamily. Homodimer.

Its subcellular location is the cytoplasm. It carries out the reaction tRNA(Asx) + L-aspartate + ATP = L-aspartyl-tRNA(Asx) + AMP + diphosphate. Its function is as follows. Aspartyl-tRNA synthetase with relaxed tRNA specificity since it is able to aspartylate not only its cognate tRNA(Asp) but also tRNA(Asn). Reaction proceeds in two steps: L-aspartate is first activated by ATP to form Asp-AMP and then transferred to the acceptor end of tRNA(Asp/Asn). This Coxiella burnetii (strain RSA 331 / Henzerling II) protein is Aspartate--tRNA(Asp/Asn) ligase.